The chain runs to 1133 residues: Protein TOPLESS-RELATED PROTEIN 2 (1133 aa).

Positions 4–36 (LSRELVFLILQFLDEEKFKETVHKLEQESAFYF) constitute a LisH domain. The CTLH domain occupies 34–92 (FYFNMKHFEDLVQGGEWDEVEKYLSGFTKVEDNRYSMKIFFEIRKQKYLEALDRHDRAK). 12 WD repeats span residues 344–384 (NQGS…RIAH), 451–492 (AHIG…KQYT), 495–536 (GHEA…SRVD), 539–582 (APGH…IKRT), 586–625 (FRKRSLGVVQFDTTRNRFLAAGDEFVVKFWDMDNTNILTT), 630–669 (GGLPASPRLRFNREGSLLAVTANENGIKILANTDGQRLLR), 771–810 (ATSSKVVRLLYTNNGVALLALGSNAVHKLWKWQRTDRNPN), 838–876 (NPEEATACIALSKNDSYVMSASGGKVSLFNMMTFKVMTT), 879–919 (APPP…VKSK), 922–961 (GHSKKITGLAFSQSMNMLVSSGADAQLCAWSIDGWEKKKS), 970–1011 (RSGA…RSWS), and 1015–1054 (ALPAPISSAIYSCDGLLIYAGFCDGAIGVFEAESLRLRCR). The disordered stretch occupies residues 1102–1133 (DSDPKWGVAPPQDNGTHPTISAAPAAANKPEV).

In terms of assembly, tetramer. Interacts with D53, probably via the EAR motifs. Binds to AP2-1/TOE1, AP2-3/SNB and AP2-2/IDS1. Interacts with WOX1. Interacts with MOF1. In terms of tissue distribution, expressed in stems and panicles. Detected in roots, seeds, leaves and sheath. Expressed in the meristem and lateral organ primordia.

It is found in the nucleus. Functionally, transcriptional corepressor involved in branch formation regulation, presumably by suppressing primary branch formation and promoting secondary branch formation. Required for the cell elongation in the first internode and pollen development. Probable downstream regulator of strigolactones signaling important in axillary meristem maintenance. Acts in auxin signaling and is associated with the regulation of histone deacetylation. Essential for the function of miR172 microRNA and its target genes in regulating panicle development. The chain is Protein TOPLESS-RELATED PROTEIN 2 from Oryza sativa subsp. japonica (Rice).